Here is a 196-residue protein sequence, read N- to C-terminus: Alpha-crystallin A chain (196 aa).

At M1 the chain carries N-acetylmethionine. Positions 1-63 (MDVTIQHPWF…RTVLDSGISE (63 aa)) are required for complex formation with BFSP1 and BFSP2. Q6 carries the deamidated glutamine; partial modification. S45 carries the phosphoserine modification. Q50 bears the Deamidated glutamine; partial mark. The sHSP domain maps to 76–185 (HAGNPKNNPV…GHSERAIPVS (110 aa)). N6-acetyllysine is present on residues K93 and K122. A Zn(2+)-binding site is contributed by H123. At N124 the chain carries Deamidated asparagine; partial. Zn(2+) contacts are provided by E125 and H130. S145 is modified (phosphoserine). The residue at position 146 (N146) is a Deamidated asparagine; partial. The disordered stretch occupies residues 168 to 196 (KVQSGLDAGHSERAIPVSREEKPSSAPSS). The residue at position 170 (Q170) is a Deamidated glutamine; partial. Residues 176–190 (GHSERAIPVSREEKP) show a composition bias toward basic and acidic residues. H177 lines the Zn(2+) pocket. The O-linked (GlcNAc) serine glycan is linked to S185.

It belongs to the small heat shock protein (HSP20) family. In terms of assembly, heteropolymer composed of three CRYAA and one CRYAB subunits. Inter-subunit bridging via zinc ions enhances stability, which is crucial as there is no protein turn over in the lens. Can also form homodimers and homotetramers (dimers of dimers) which serve as the building blocks of homooligomers. Within homooligomers, the zinc-binding motif is created from residues of 3 different molecules. His-123 and Glu-125 from one molecule are ligands of the zinc ion, and His-130 and His-177 residues from additional molecules complete the site with tetrahedral coordination geometry. Part of a complex required for lens intermediate filament formation composed of BFSP1, BFSP2 and CRYAA. In terms of processing, acetylation at Lys-93 may increase chaperone activity. Post-translationally, undergoes age-dependent proteolytical cleavage at the C-terminus.

It localises to the cytoplasm. The protein localises to the nucleus. In terms of biological role, contributes to the transparency and refractive index of the lens. Acts as a chaperone, preventing aggregation of various proteins under a wide range of stress conditions. Required for the correct formation of lens intermediate filaments as part of a complex composed of BFSP1, BFSP2 and CRYAA. The chain is Alpha-crystallin A chain (Cryaa) from Mus musculus (Mouse).